The following is a 531-amino-acid chain: Transcription termination/antitermination protein NusA (531 aa).

Residues 165-235 (GEVIEAKVED…SLWPITLSRS (71 aa)) enclose the S1 motif domain. In terms of domain architecture, KH spans 340 to 410 (DTSIEVVVPA…FGIKKRREKI (71 aa)). The segment covering 463-475 (EKQVTPKEKEKVQ) has biased composition (basic and acidic residues). A disordered region spans residues 463–531 (EKQVTPKEKE…KQTFDSFDDL (69 aa)). Over residues 476 to 490 (PKAKVHSNSHSKKPA) the composition is skewed to basic residues. Positions 502-512 (ASDKNLKKDQV) are enriched in basic and acidic residues. Residues 513 to 531 (DNNQTNPQTKQTFDSFDDL) are compositionally biased toward polar residues.

It belongs to the NusA family. Monomer. Binds directly to the core enzyme of the DNA-dependent RNA polymerase and to nascent RNA.

The protein resides in the cytoplasm. In terms of biological role, participates in both transcription termination and antitermination. This chain is Transcription termination/antitermination protein NusA, found in Mycoplasma genitalium (strain ATCC 33530 / DSM 19775 / NCTC 10195 / G37) (Mycoplasmoides genitalium).